A 272-amino-acid chain; its full sequence is METYAVFGNPIAHSKSPFIHQQFAQQLDIVHPYGRVLAPINNFINTLDAFFAAGGKGANITVPFKEEAFARSDELTERASLAGAVNTLKRLEDGRLLGDNTDGIGLLSDLKRLNFIRPGWRILLIGAGGASRGVLLPLLSLDCAVTITNRTASRAEALAKIFAHTGSVHATDMDKLHGCEFDLIINATSSGIRGEIPAIPASLIHPSLCCYDMFYQKGNTPFLSWCVQQGAKRYADGLGMLVGQAAHAVLLWHGVLPQVEPVIELLQQELLA.

Shikimate is bound by residues serine 14–serine 16 and threonine 61. The Proton acceptor role is filled by lysine 65. NADP(+) is bound at residue glutamate 77. Residues asparagine 86 and aspartate 102 each coordinate shikimate. NADP(+) is bound by residues glycine 126–alanine 130, asparagine 149–arginine 154, and methionine 213. Tyrosine 215 is a binding site for shikimate. Glycine 237 lines the NADP(+) pocket.

The protein belongs to the shikimate dehydrogenase family. In terms of assembly, homodimer.

It catalyses the reaction shikimate + NADP(+) = 3-dehydroshikimate + NADPH + H(+). It participates in metabolic intermediate biosynthesis; chorismate biosynthesis; chorismate from D-erythrose 4-phosphate and phosphoenolpyruvate: step 4/7. Functionally, involved in the biosynthesis of the chorismate, which leads to the biosynthesis of aromatic amino acids. Catalyzes the reversible NADPH linked reduction of 3-dehydroshikimate (DHSA) to yield shikimate (SA). In Salmonella schwarzengrund (strain CVM19633), this protein is Shikimate dehydrogenase (NADP(+)).